A 391-amino-acid polypeptide reads, in one-letter code: Elongation factor Tu 1 (391 aa).

The 192-residue stretch at 10–201 folds into the tr-type G domain; sequence KPHVNIGTIG…EVDNYIPTPE (192 aa). Residues 19–26 form a G1 region; that stretch reads GHVDHGKT. 19–26 is a binding site for GTP; it reads GHVDHGKT. Thr-26 contacts Mg(2+). The tract at residues 55–59 is G2; it reads GITIS. The segment at 76-79 is G3; it reads DCPG. GTP contacts are provided by residues 76-80 and 131-134; these read DCPGH and NKVD. Residues 131–134 are G4; sequence NKVD. The segment at 169 to 171 is G5; it reads SAL.

Belongs to the TRAFAC class translation factor GTPase superfamily. Classic translation factor GTPase family. EF-Tu/EF-1A subfamily. As to quaternary structure, monomer.

It is found in the cytoplasm. The enzyme catalyses GTP + H2O = GDP + phosphate + H(+). In terms of biological role, GTP hydrolase that promotes the GTP-dependent binding of aminoacyl-tRNA to the A-site of ribosomes during protein biosynthesis. The sequence is that of Elongation factor Tu 1 from Bartonella quintana (strain Toulouse) (Rochalimaea quintana).